The chain runs to 299 residues: Transcription elongation factor A protein 2 (299 aa).

The TFIIS N-terminal domain occupies 5–82 (EEIARIARRL…KSWKKLLDVS (78 aa)). Residue lysine 57 forms a Glycyl lysine isopeptide (Lys-Gly) (interchain with G-Cter in ubiquitin) linkage. Residues serine 59 and serine 100 each carry the phosphoserine modification. The segment at 83–126 (DGKSRDQGRGTPLPTSSSKDASGTTDLSCKKPDPPRTSSTPRIT) is disordered. Residues 95–109 (LPTSSSKDASGTTDL) are compositionally biased toward polar residues. Residues 138 to 254 (VRNKCREMLT…EHQMARTGGT (117 aa)) form the TFIIS central domain. Residues 257–297 (DLFTCNKCRKKNCTYTQVQTRSSDEPMTTYVVCNECGNRWK) form a TFIIS-type zinc finger. Zn(2+) contacts are provided by cysteine 261, cysteine 264, cysteine 289, and cysteine 292.

The protein belongs to the TFS-II family. Interacts with the basal transcription factor GTF2B. Interacts with REXO1. As to expression, testis specific.

The protein localises to the nucleus. Its function is as follows. Necessary for efficient RNA polymerase II transcription elongation past template-encoded arresting sites. The arresting sites in DNA have the property of trapping a certain fraction of elongating RNA polymerases that pass through, resulting in locked ternary complexes. Cleavage of the nascent transcript by S-II allows the resumption of elongation from the new 3'-terminus. The sequence is that of Transcription elongation factor A protein 2 (Tcea2) from Rattus norvegicus (Rat).